Here is a 199-residue protein sequence, read N- to C-terminus: MLLPDLHPYTILLSIFLVLVAKQLVATIGKSTIQEFVWLVYLKVSSNQSIKTYNSKQHELHETNRQKRAISAQDEYAKWTKLNRQADKLSAELQKLNQEIQQQKSSIDKASNALILVLTTLPIWIARVFYRKTHLFYIRQGIFPKYVEWVLALPFLPNGAVGLTIWMFAVNSVVSNFSFLVSFPFAKRVSKPVRDTKVE.

Residues 1–11 (MLLPDLHPYTI) lie on the Lumenal side of the membrane. Residues 12 to 31 (LLSIFLVLVAKQLVATIGKS) traverse the membrane as a helical segment. The Cytoplasmic segment spans residues 32-115 (TIQEFVWLVY…SIDKASNALI (84 aa)). Residues 76–116 (YAKWTKLNRQADKLSAELQKLNQEIQQQKSSIDKASNALIL) adopt a coiled-coil conformation. Residues 116–136 (LVLTTLPIWIARVFYRKTHLF) form a helical membrane-spanning segment. Residues 137–160 (YIRQGIFPKYVEWVLALPFLPNGA) lie on the Lumenal side of the membrane. Residues 161–177 (VGLTIWMFAVNSVVSNF) traverse the membrane as a helical segment. The Cytoplasmic portion of the chain corresponds to 178–199 (SFLVSFPFAKRVSKPVRDTKVE).

Belongs to the WRB/GET1 family. Component of the Golgi to ER traffic (GET) complex, which is composed of GET1, GET2 and GET3. Within the complex, GET1 and GET2 form a heterotetramer which is stabilized by phosphatidylinositol binding and which binds to the GET3 homodimer.

The protein localises to the endoplasmic reticulum membrane. It localises to the golgi apparatus membrane. Functionally, required for the post-translational delivery of tail-anchored (TA) proteins to the endoplasmic reticulum. Together with GET2, acts as a membrane receptor for soluble GET3, which recognizes and selectively binds the transmembrane domain of TA proteins in the cytosol. The GET complex cooperates with the HDEL receptor ERD2 to mediate the ATP-dependent retrieval of resident ER proteins that contain a C-terminal H-D-E-L retention signal from the Golgi to the ER. This Candida albicans (strain SC5314 / ATCC MYA-2876) (Yeast) protein is Golgi to ER traffic protein 1.